We begin with the raw amino-acid sequence, 219 residues long: Protein-L-isoaspartate O-methyltransferase (219 aa).

S66 is an active-site residue.

Belongs to the methyltransferase superfamily. L-isoaspartyl/D-aspartyl protein methyltransferase family.

Its subcellular location is the cytoplasm. The catalysed reaction is [protein]-L-isoaspartate + S-adenosyl-L-methionine = [protein]-L-isoaspartate alpha-methyl ester + S-adenosyl-L-homocysteine. Its function is as follows. Catalyzes the methyl esterification of L-isoaspartyl residues in peptides and proteins that result from spontaneous decomposition of normal L-aspartyl and L-asparaginyl residues. It plays a role in the repair and/or degradation of damaged proteins. The protein is Protein-L-isoaspartate O-methyltransferase of Xanthobacter autotrophicus (strain ATCC BAA-1158 / Py2).